The chain runs to 281 residues: Urease accessory protein UreD (281 aa).

It belongs to the UreD family. UreD, UreF and UreG form a complex that acts as a GTP-hydrolysis-dependent molecular chaperone, activating the urease apoprotein by helping to assemble the nickel containing metallocenter of UreC. The UreE protein probably delivers the nickel.

Its subcellular location is the cytoplasm. Functionally, required for maturation of urease via the functional incorporation of the urease nickel metallocenter. This is Urease accessory protein UreD from Pseudomonas savastanoi pv. phaseolicola (strain 1448A / Race 6) (Pseudomonas syringae pv. phaseolicola (strain 1448A / Race 6)).